The chain runs to 711 residues: Hydroperoxide isomerase ALOXE3 (711 aa).

The PLAT domain maps to 2–119 (AVYRLCVTTG…TVELRPGTAR (118 aa)). Residues 120-711 (TICQDSLPLL…PPLIENSVSI (592 aa)) enclose the Lipoxygenase domain. Positions 408, 413, 588, 592, and 711 each coordinate Fe cation.

The protein belongs to the lipoxygenase family. Fe cation is required as a cofactor. Skin specific.

The protein localises to the cytoplasm. It catalyses the reaction a hydroperoxyeicosatetraenoate = a hydroxy-epoxy-eicosatetraenoate. It carries out the reaction (8S)-hydroperoxy-(5Z,9E,11Z,14Z)-eicosatetraenoate = (10R)-hydroxy-(8S,9S)-epoxy-(5Z,11Z,14Z)-eicosatrienoate. The catalysed reaction is (12R)-hydroperoxy-(5Z,8Z,10E,14Z)-eicosatetraenoate = (8R)-hydroxy-(11R,12R)-epoxy-(5Z,9E,14Z)-eicosatrienoate. The enzyme catalyses (12S)-hydroperoxy-(5Z,8Z,10E,14Z)-eicosatetraenoate = (8R)-hydroxy-(11S,12S)-epoxy-(5Z,9E,14Z)-eicosatrienoate. It catalyses the reaction (12S)-hydroperoxy-(5Z,8Z,10E,14Z)-eicosatetraenoate = (10R)-hydroxy-(11S,12S)-epoxy-(5Z,8Z,14Z)-eicosatrienoate. It carries out the reaction (15S)-hydroperoxy-(5Z,8Z,11Z,13E)-eicosatetraenoate = (13R)-hydroxy-(14S,15S)-epoxy-(5Z,8Z,11Z)-eicosatrienoate. The catalysed reaction is (13S)-hydroperoxy-(9Z,11E)-octadecadienoate = 11-hydroxy-(12S,13S)-epoxy-(9Z)-octadecenoate. The enzyme catalyses (5S)-hydroperoxy-(6E,8Z,11Z,14Z)-eicosatetraenoate = 7R-hydroxy-5S,6S-epoxy-(8Z,11Z,14Z)-eicosatrienoate. It catalyses the reaction N-[omega-(9R)-hydroperoxy-(10E,12Z)-octadecadienoyloxy]acyl-beta-D-glucosyl-(1&lt;-&gt;1)-octadecasphing-4E-enine = a N-[omega-(9R,10R)-epoxy-(13R)-hydroxy-(11E)-octadecenoyloxy]acyl-beta-D-glucosyl-(1&lt;-&gt;1)-sphing-4E-enine. It carries out the reaction a N-[omega-(9R)-hydroperoxy-(10E,12Z)-octadecadienoyloxy]-acylsphin-4E-enine = a N-[omega-(9R,10R)-epoxy-(13R)-hydroxy-(11E)-octadecenoyloxy]-acylsphing-4E-enine. The catalysed reaction is a hydroperoxyeicosatetraenoate = an oxoeicosatetraenoate + H2O. The enzyme catalyses (8R)-hydroperoxy-(5Z,9E,11Z,14Z)-eicosatetraenoate = 8-oxo-(5Z,9E,11Z,14Z)-eicosatetraenoate + H2O. It catalyses the reaction (8S)-hydroperoxy-(5Z,9E,11Z,14Z)-eicosatetraenoate = 8-oxo-(5Z,9E,11Z,14Z)-eicosatetraenoate + H2O. It carries out the reaction (12R)-hydroperoxy-(5Z,8Z,10E,14Z)-eicosatetraenoate = 12-oxo-(5Z,8Z,10E,14Z)-eicosatetraenoate + H2O. The catalysed reaction is (12S)-hydroperoxy-(5Z,8Z,10E,14Z)-eicosatetraenoate = 12-oxo-(5Z,8Z,10E,14Z)-eicosatetraenoate + H2O. The enzyme catalyses (15S)-hydroperoxy-(5Z,8Z,11Z,13E)-eicosatetraenoate = 15-oxo-(5Z,8Z,11Z,13E)-eicosatetraenoate + H2O. It catalyses the reaction (13S)-hydroperoxy-(9Z,11E)-octadecadienoate = 13-oxo-(9Z,11E)-octadecadienoate + H2O. It participates in lipid metabolism; hydroperoxy eicosatetraenoic acid biosynthesis. The protein operates within lipid metabolism; sphingolipid metabolism. Its function is as follows. Non-heme iron-containing lipoxygenase which is atypical in that it displays a prominent hydroperoxide isomerase activity and a reduced lipoxygenases activity. The hydroperoxide isomerase activity catalyzes the isomerization of hydroperoxides, derived from arachidonic and linoleic acid by ALOX12B, into hepoxilin-type epoxyalcohols and ketones. In presence of oxygen, oxygenates polyunsaturated fatty acids, including arachidonic acid, to produce fatty acid hydroperoxides. In the skin, acts downstream of ALOX12B on the linoleate moiety of esterified omega-hydroxyacyl-sphingosine (EOS) ceramides to produce an epoxy-ketone derivative, a crucial step in the conjugation of omega-hydroxyceramide to membrane proteins. Therefore plays a crucial role in the synthesis of corneocytes lipid envelope and the establishment of the skin barrier to water loss. In parallel, it may have a signaling function in barrier formation through the production of hepoxilins metabolites. Also plays a role in adipocyte differentiation through hepoxilin A3 and hepoxilin B3 production which in turn activate PPARG. Through the production of hepoxilins in the spinal cord, it may regulate inflammatory tactile allodynia. The chain is Hydroperoxide isomerase ALOXE3 from Mus musculus (Mouse).